The primary structure comprises 430 residues: Tol-Pal system protein TolB (430 aa).

An N-terminal signal peptide occupies residues 1 to 26 (MSLMTKLGLRTLVASCLIAVGGAAHA).

This sequence belongs to the TolB family. The Tol-Pal system is composed of five core proteins: the inner membrane proteins TolA, TolQ and TolR, the periplasmic protein TolB and the outer membrane protein Pal. They form a network linking the inner and outer membranes and the peptidoglycan layer.

The protein resides in the periplasm. Part of the Tol-Pal system, which plays a role in outer membrane invagination during cell division and is important for maintaining outer membrane integrity. The sequence is that of Tol-Pal system protein TolB from Paraburkholderia phytofirmans (strain DSM 17436 / LMG 22146 / PsJN) (Burkholderia phytofirmans).